The following is a 987-amino-acid chain: Ephrin type-B receptor 4a (987 aa).

A signal peptide spans 1–24; sequence MELFSRNVAAFWIILLEFLLGSVA. The Extracellular portion of the chain corresponds to 25 to 548; sequence EEEVLMNTKT…DSSSPLLVTG (524 aa). Positions 26 to 205 constitute an Eph LBD domain; the sequence is EEVLMNTKTE…FFKKCPALTR (180 aa). 2 disulfides stabilise this stretch: Cys70-Cys187 and Cys104-Cys114. The disordered stretch occupies residues 319 to 340; that stretch reads DSADTPCTRPPSSPRSPVPQVN. The segment covering 326-335 has biased composition (pro residues); sequence TRPPSSPRSP. 2 Fibronectin type-III domains span residues 328 to 438 and 442 to 536; these read PPSS…TSPN and LVSG…TLPD. A helical membrane pass occupies residues 549–569; it reads ILIAMGMLLLIIVIGAAIYCI. Residues 570–987 are Cytoplasmic-facing; that stretch reads RKQNNYKDPE…QNKAPGNVLY (418 aa). The region spanning 621–884 is the Protein kinase domain; sequence VKIEEVIGAG…NIVSALDKLI (264 aa). ATP is bound by residues 627–635 and Lys653; that span reads IGAGEFGEV. The active-site Proton acceptor is the Asp746. The SAM domain maps to 914–978; that stretch reads SSCGTVGDWL…LSSIEALGIQ (65 aa).

This sequence belongs to the protein kinase superfamily. Tyr protein kinase family. Ephrin receptor subfamily.

The protein localises to the cell membrane. The catalysed reaction is L-tyrosyl-[protein] + ATP = O-phospho-L-tyrosyl-[protein] + ADP + H(+). Its function is as follows. Receptor tyrosine kinase which binds promiscuously transmembrane ephrin-B family ligands residing on adjacent cells, leading to contact-dependent bidirectional signaling into neighboring cells. The signaling pathway downstream of the receptor is referred to as forward signaling while the signaling pathway downstream of the ephrin ligand is referred to as reverse signaling. Together with its cognate ligand/functional ligand EFNB2 is involved in the regulation of cell adhesion and cell migration, and plays a central role in heart morphogenesis, angiogenesis and blood vessel remodeling and permeability. EPHB4-mediated forward signaling controls cellular repulsion and segregation from EFNB2-expressing cells. Involved in somitogenesis. The sequence is that of Ephrin type-B receptor 4a from Danio rerio (Zebrafish).